The sequence spans 142 residues: ATP synthase epsilon chain (142 aa).

The protein belongs to the ATPase epsilon chain family. In terms of assembly, F-type ATPases have 2 components, CF(1) - the catalytic core - and CF(0) - the membrane proton channel. CF(1) has five subunits: alpha(3), beta(3), gamma(1), delta(1), epsilon(1). CF(0) has three main subunits: a, b and c.

The protein resides in the cell inner membrane. Its function is as follows. Produces ATP from ADP in the presence of a proton gradient across the membrane. The polypeptide is ATP synthase epsilon chain (Shewanella halifaxensis (strain HAW-EB4)).